The chain runs to 346 residues: Zinc finger CCCH domain-containing protein 28 (346 aa).

Residues 1–99 (MASAETPNPD…SPRYPDGKRR (99 aa)) are disordered. Residues 17–41 (DAAAAADPAAAAPAAAATDPAAAGS) are compositionally biased toward low complexity. Positions 62 to 86 (RSSRSRSRSPRRGRSRSRSRSRSRG) are enriched in basic residues. C3H1-type zinc fingers lie at residues 103 to 131 (DLNVEVCRDFLRDRCARADIECKYAHPHP), 138 to 165 (DSKVTACADSLRNNCFRGRTCRYYHPPP), 181 to 209 (KVKMQVCRDFTRGRCSRSANECRFLHHSP), 211 to 237 (EDCAIVCQDFLRGRCDRKSCRYSHVMA), 282 to 308 (NYGVEVCRDYLKNMCNRESCRFAHPDL), and 314 to 340 (NTQVEVCRDFKRGECNRPACRFYHPPA).

The sequence is that of Zinc finger CCCH domain-containing protein 28 from Oryza sativa subsp. japonica (Rice).